Here is a 642-residue protein sequence, read N- to C-terminus: MSVIDKTSSAVNPLREKVTTACAKKLYNDKDCIKIADFITPLVEDMNLDSNVDRKLHNKLERYELRLNKEYLSEFEKINNIVQKFDELCVKMNSTCTNLSKQMETVKFKSVDLVQKTASLKEKKASIESRCNMINEFLENYSLSSEELRELDECEQSGHLSEFFFKVLERCHEIRENCRNMVQEQGHLAAFEVMEKMQKIDERSHAIICNNLKREFQNLTVDSHQKKQILSKAFKIISQNDAVFQLAIDQYISSRSQELLNQFVEINKMAVQMPEGLAEPLKAVGDMLTSIHELTEQEKQLFSSICSAENLPIVLDECLKSLTSPFKIRVEQLLSTEKNAITIFKMGNILIFYANKFETLIRKDSYFTIMLADLVKTVRQVCIAGINHHVDGLMRKMTSPHYDLLPVPEVRQCLSLYHGLISIAVKTGDLNLLLEPERIYEYVLEPLIQTVQLSATRLKSDIEVSVFTINCLTVIRSAISEISAFKKKIEMIDAMIEGNSDVLVSVQVSEMLEKSGILELYQKFNAVNPAEKKPLSTLPGLESTTVGEAIVMFTQYLHNHASSDHTYDIDQQILASEERQRIRERNTLEFLKVYKMIVDRLGNPTNGYENLHYLPIEHVESVLKFEKEKENTPSSNESESLA.

It belongs to the COG6 family. As to quaternary structure, component of the conserved oligomeric Golgi complex which is composed of eight different subunits and is required for normal Golgi morphology and localization.

The protein localises to the golgi apparatus membrane. Required for normal Golgi function. The protein is Conserved oligomeric Golgi complex subunit 6 (cogc-6) of Caenorhabditis elegans.